Here is a 258-residue protein sequence, read N- to C-terminus: uncharacterized protein (258 aa).

A helical transmembrane segment spans residues 163–187; that stretch reads GIVGAAGLMLMFADLNGIPGICLMG.

Its subcellular location is the membrane. This is an uncharacterized protein from Methanocaldococcus jannaschii (strain ATCC 43067 / DSM 2661 / JAL-1 / JCM 10045 / NBRC 100440) (Methanococcus jannaschii).